Consider the following 488-residue polypeptide: MIPVVALVGRPNVGKSTLFNRLTRTRDALVADFPGLTRDRKYGRAFLSGYEFIVVDTGGIDGTEEGIETKMAEQSLAAIEEADVVLFMTDARAGLTAADLSIAQHLRSREKTTFVVANKVDGIDADSACAEFWSLGLGEVYQMAASQGRGVTNMIEYALTPYAEAMGIVRQGEDEVTEEREYTEEEAEAEQKRLQDLPIKLAIIGKPNVGKSTLTNRILGEERVVVFDEPGTTRDSIYIPMEREGREYVIIDTAGVRRRSKVHQVIEKFSVIKTLKAVEDANVVLLIIDAREGIAEQDLGLLGFALNAGRALVIAVNKWDGIDQGIKDRVKSELDRRLGFIDFARIHFISALHGTGVGHLFESIEEAYDSATRRVSTSMLTRIMQMSQDDHQPPLVNGRRVKLKYAHAGGYNPPIVVIHGNQVSRLPDSYKRYMMNYFRRSLKVVGTPIQLRFQEGDNPFENKTEKLTMSQERRRKRAQSHIKDRKTK.

EngA-type G domains lie at 3–166 and 199–372; these read PVVA…AEAM and IKLA…DSAT. Residues 9–16, 56–60, 118–121, 205–212, 252–256, and 317–320 each bind GTP; these read GRPNVGKS, DTGGI, NKVD, GKPNVGKS, DTAGV, and NKWD. The KH-like domain occupies 373 to 457; the sequence is RRVSTSMLTR…PIQLRFQEGD (85 aa). A disordered region spans residues 460–488; it reads FENKTEKLTMSQERRRKRAQSHIKDRKTK. A compositionally biased stretch (basic residues) spans 473 to 488; the sequence is RRRKRAQSHIKDRKTK.

This sequence belongs to the TRAFAC class TrmE-Era-EngA-EngB-Septin-like GTPase superfamily. EngA (Der) GTPase family. Associates with the 50S ribosomal subunit.

Functionally, GTPase that plays an essential role in the late steps of ribosome biogenesis. The protein is GTPase Der of Shewanella baltica (strain OS223).